Here is a 420-residue protein sequence, read N- to C-terminus: Tryptophan synthase beta chain (420 aa).

Residue Lys99 is modified to N6-(pyridoxal phosphate)lysine.

Belongs to the TrpB family. Tetramer of two alpha and two beta chains. Requires pyridoxal 5'-phosphate as cofactor.

It catalyses the reaction (1S,2R)-1-C-(indol-3-yl)glycerol 3-phosphate + L-serine = D-glyceraldehyde 3-phosphate + L-tryptophan + H2O. Its pathway is amino-acid biosynthesis; L-tryptophan biosynthesis; L-tryptophan from chorismate: step 5/5. The beta subunit is responsible for the synthesis of L-tryptophan from indole and L-serine. The polypeptide is Tryptophan synthase beta chain (Helicobacter hepaticus (strain ATCC 51449 / 3B1)).